The following is a 329-amino-acid chain: Sulfate-binding protein (329 aa).

The signal sequence occupies residues 1–19 (MKKWGVGFTLLLASTSILA).

This sequence belongs to the prokaryotic sulfate-binding protein family.

The protein localises to the periplasm. This protein specifically binds sulfate and is involved in its transmembrane transport. The polypeptide is Sulfate-binding protein (sbp) (Salmonella typhimurium (strain LT2 / SGSC1412 / ATCC 700720)).